Reading from the N-terminus, the 516-residue chain is Flavonoid-6-hydroxylase (516 aa).

A helical membrane pass occupies residues 3–23; it reads FNAAVCAALAFISLLSYYLIW. A heme-binding site is contributed by Cys-455.

The protein belongs to the cytochrome P450 family. It depends on heme as a cofactor.

It localises to the membrane. The catalysed reaction is genkwanin + reduced [NADPH--hemoprotein reductase] + O2 = scutellarein 7-methyl ether + oxidized [NADPH--hemoprotein reductase] + H2O. It catalyses the reaction (2S)-sakuranetin + reduced [NADPH--hemoprotein reductase] + O2 = (2S)-7-methylcarthamidin + oxidized [NADPH--hemoprotein reductase] + H2O + H(+). It carries out the reaction apigenin 4',7-dimethyl ether + reduced [NADPH--hemoprotein reductase] + O2 = ladanein + oxidized [NADPH--hemoprotein reductase] + H2O + H(+). The enzyme catalyses (2S)-naringenin 4',7-dimethyl ether + reduced [NADPH--hemoprotein reductase] + O2 = (2S)-carthamidin-4',7-dimethyl ether + oxidized [NADPH--hemoprotein reductase] + H2O + H(+). It functions in the pathway flavonoid metabolism. Its function is as follows. 6-OH hydroxylase involved in the biosynthesis of polymethoxylated flavonoids natural products such as pebrellin, aroma compounds which contribute to the flavor of peppermint, and exhibit pharmacological activities such as anti-allergic, anti-oxidant, antibacterial, anti-proliferative, and anti-inflammatory effects. Catalyzes the 6-hydroxylation of 7-O-methylated precursors such as the conversion of genkwanin (GENK) to scutellarein-7-methyl ether (SCU7Me). Can also use apigenin-7,4'-dimethyl ether (AdM), naringenin-7-methyl ether (SAK) and naringenin-7,4'-dimethyl ether (NdM) as substrates. In Mentha piperita (Peppermint), this protein is Flavonoid-6-hydroxylase.